The chain runs to 137 residues: Fluoride-specific ion channel FluC 2 (137 aa).

4 helical membrane passes run 3–23, 44–64, 76–96, and 111–131; these read MGGSFVVLSGVIAIVVGSVLG, WGTMTINVTGAFLIGIFGALA, PWLFAVTGFLGCYTTVSSFSL, and LGNVAFSVGLCLAAVSCGFLL. Na(+) contacts are provided by Gly-86 and Thr-89.

It belongs to the fluoride channel Fluc/FEX (TC 1.A.43) family.

It localises to the cell inner membrane. It catalyses the reaction fluoride(in) = fluoride(out). Na(+) is not transported, but it plays an essential structural role and its presence is essential for fluoride channel function. Its function is as follows. Fluoride-specific ion channel. Important for reducing fluoride concentration in the cell, thus reducing its toxicity. The protein is Fluoride-specific ion channel FluC 2 of Bradyrhizobium diazoefficiens (strain JCM 10833 / BCRC 13528 / IAM 13628 / NBRC 14792 / USDA 110).